Consider the following 398-residue polypeptide: Phosphoglycerate kinase (398 aa).

Substrate contacts are provided by residues 21–23 (DFN), Arg-36, 59–62 (HLGR), Arg-119, and Arg-157. ATP is bound by residues Lys-208, Gly-296, Glu-327, and 354–357 (GGDS).

The protein belongs to the phosphoglycerate kinase family. In terms of assembly, monomer.

It localises to the cytoplasm. The enzyme catalyses (2R)-3-phosphoglycerate + ATP = (2R)-3-phospho-glyceroyl phosphate + ADP. It functions in the pathway carbohydrate degradation; glycolysis; pyruvate from D-glyceraldehyde 3-phosphate: step 2/5. This is Phosphoglycerate kinase from Streptococcus uberis (strain ATCC BAA-854 / 0140J).